A 559-amino-acid chain; its full sequence is Suppressor of tumorigenicity 7 protein-like (559 aa).

3 consecutive transmembrane segments (helical) span residues 39–59, 83–103, and 513–533; these read GLANSGSTLWFLAGLGLLYAL, FYVALTGTSSLISGLIFIFEW, and LPFFIHFTAGLCSSTAMLAFL.

The protein belongs to the ST7 family. As to expression, ubiquitously expressed.

It localises to the membrane. In Mus musculus (Mouse), this protein is Suppressor of tumorigenicity 7 protein-like (St7l).